Reading from the N-terminus, the 384-residue chain is MGIKKLTDLIEDNAPTSIKTNILKNYFGRIIAIDASTSLYQFLIAMNADVSSALTNQLGETTSHLQGMFYRTIKLISRGIKPIYVFDGSAPVLKSGELAKRQARRKEAKENLKEATEVGTNEEVQKFAKRVITVTRKQNEDCIKLLTLMGVPIVKAPCEAEAQCAEIVKKGKAWATGSEDMDSLTLGSTVLLRRLFFSEAKKMPILEFELQSVLEGLGLTQDEFIDLSILLGCDYCDSIKGIGPKRAIELIQKHKSLEEVIKHLDKSKYPLPEFFPYPEVRELFKNPNVIPADQLPPFQWKDPDVEGLNKFLVEEMGFSDVRVAQGIEKLKKFKNTSVQSRMDSFITVIKKPEDPNDKKKKVTKTPSKPSAKTSKKSSSTFKRK.

The N-domain stretch occupies residues 1 to 105 (MGIKKLTDLI…GELAKRQARR (105 aa)). Residue aspartate 34 participates in Mg(2+) binding. Arginine 71 serves as a coordination point for DNA. Aspartate 87, glutamate 159, glutamate 161, aspartate 180, and aspartate 182 together coordinate Mg(2+). The segment at 123–254 (EVQKFAKRVI…KRAIELIQKH (132 aa)) is I-domain. Residue glutamate 159 coordinates DNA. DNA-binding residues include glycine 232 and aspartate 234. Aspartate 234 is a binding site for Mg(2+). Residues 338 to 346 (VQSRMDSFI) are interaction with PCNA. The tract at residues 349–384 (IKKPEDPNDKKKKVTKTPSKPSAKTSKKSSSTFKRK) is disordered. The span at 364-384 (KTPSKPSAKTSKKSSSTFKRK) shows a compositional bias: low complexity.

The protein belongs to the XPG/RAD2 endonuclease family. FEN1 subfamily. As to quaternary structure, interacts with PCNA. Three molecules of repg bind to one PCNA trimer with each molecule binding to one PCNA monomer. PCNA stimulates the nuclease activity without altering cleavage specificity. Mg(2+) is required as a cofactor. Post-translationally, phosphorylated. Phosphorylation upon DNA damage induces relocalization to the nuclear plasma.

Its subcellular location is the nucleus. The protein resides in the nucleolus. The protein localises to the nucleoplasm. It is found in the mitochondrion. In terms of biological role, structure-specific nuclease with 5'-flap endonuclease and 5'-3' exonuclease activities involved in DNA replication and repair. During DNA replication, cleaves the 5'-overhanging flap structure that is generated by displacement synthesis when DNA polymerase encounters the 5'-end of a downstream Okazaki fragment. It enters the flap from the 5'-end and then tracks to cleave the flap base, leaving a nick for ligation. Also involved in the long patch base excision repair (LP-BER) pathway, by cleaving within the apurinic/apyrimidinic (AP) site-terminated flap. Acts as a genome stabilization factor that prevents flaps from equilibrating into structures that lead to duplications and deletions. Also possesses 5'-3' exonuclease activity on nicked or gapped double-stranded DNA, and exhibits RNase H activity. Also involved in replication and repair of rDNA and in repairing mitochondrial DNA. In Dictyostelium discoideum (Social amoeba), this protein is Flap endonuclease 1.